We begin with the raw amino-acid sequence, 114 residues long: Putative ANKRD40 C-terminal-like protein (114 aa).

The protein is Putative ANKRD40 C-terminal-like protein of Homo sapiens (Human).